The sequence spans 526 residues: Peptide chain release factor 3 (526 aa).

One can recognise a tr-type G domain in the interval 9 to 277; sequence DRRRTFAIVS…TFVDHAPAPL (269 aa). Residues 18 to 25, 86 to 90, and 140 to 143 each bind GTP; these read SHPDAGKT, DTPGH, and NKLD.

The protein belongs to the TRAFAC class translation factor GTPase superfamily. Classic translation factor GTPase family. PrfC subfamily.

It localises to the cytoplasm. In terms of biological role, increases the formation of ribosomal termination complexes and stimulates activities of RF-1 and RF-2. It binds guanine nucleotides and has strong preference for UGA stop codons. It may interact directly with the ribosome. The stimulation of RF-1 and RF-2 is significantly reduced by GTP and GDP, but not by GMP. The sequence is that of Peptide chain release factor 3 from Geobacter sulfurreducens (strain ATCC 51573 / DSM 12127 / PCA).